The sequence spans 120 residues: MSFYESVFIVRQDVSLNDIDKIVDDFTKIIKDNNGAIVKKEYWGLRALAYKIGNHKKGHYYLLGLDTTPAVKQELERKMKLNENIIRFLTQKVDSISNEPSPILKNQSTENTPVIDVTAN.

Polar residues predominate over residues 97 to 112 (SNEPSPILKNQSTENT). Residues 97-120 (SNEPSPILKNQSTENTPVIDVTAN) form a disordered region.

Belongs to the bacterial ribosomal protein bS6 family.

Functionally, binds together with bS18 to 16S ribosomal RNA. The sequence is that of Small ribosomal subunit protein bS6 from Rickettsia bellii (strain OSU 85-389).